A 455-amino-acid polypeptide reads, in one-letter code: MQGSAKMAMAVAVAVARVWRPSRGLGRTGLPLLRLLGARGLARFHPHRWQQQQHFSSLDDKPQFPGASAEFIDKLEFIQPNVISGIPIYRVMDRQGQIINPSEDPHLPQEKVLKFYKSMTLLNTMDRILYESQRQGRISFYMTNYGEEGTHVGSAAALDDTDLVFGQYREAGVLMYRDYPLELFMAQCYGNVSDLGKGRQMPVHYGCRERHFVTISSPLATQIPQAVGAAYAAKRANANRVVICYFGEGAASEGDAHAGFNFAATLECPIIFFCRNNGYAISTPTSEQYRGDGIAARGPGYGILSIRVDGNDVFAVYNATKEARRRAVAENQPFLIEAMTYRIGHHSTSDDSSAYRSVDEVNYWDKQDHPISRLRHHLQSRGWWDDEQEKAWRKQSRKKVMEAFEQAERKLKPNPSLIFSDVYQEMPAQLRKQQESLARHLQTYGEHYPLDHFEK.

The N-terminal 55 residues, methionine 1–phenylalanine 55, are a transit peptide targeting the mitochondrion. Residues tyrosine 168 and arginine 169 each coordinate thiamine diphosphate. Serine 216 is a K(+) binding site. Serine 217 serves as a coordination point for thiamine diphosphate. K(+) is bound by residues proline 218, threonine 221, and glutamine 222. A Mg(2+)-binding site is contributed by glutamate 248. Thiamine diphosphate contacts are provided by glycine 249, alanine 250, and arginine 275. Asparagine 277 and tyrosine 279 together coordinate Mg(2+). Residue histidine 346 participates in thiamine diphosphate binding. Serine 347 is modified (phosphoserine; by BCKDK). A Phosphothreonine modification is found at threonine 348. Serine 349 and serine 357 each carry phosphoserine. Lysine 366 is modified (N6-acetyllysine; alternate). Lysine 366 is subject to N6-succinyllysine; alternate. Lysine 390 carries the post-translational modification N6-succinyllysine.

Belongs to the BCKDHA family. As to quaternary structure, heterotetramer of 2 alpha/BCKDHA and 2 beta chains/BCKDHB that forms the branched-chain alpha-keto acid decarboxylase (E1) component of the BCKD complex. The branched-chain alpha-ketoacid dehydrogenase is a large complex composed of three major building blocks E1, E2 and E3. It is organized around E2, a 24-meric cubic core composed of DBT, to which are associated 6 to 12 copies of E1, and approximately 6 copies of the dehydrogenase E3, a DLD dimer. Interacts with PPM1K. It depends on thiamine diphosphate as a cofactor. Mg(2+) serves as cofactor. Post-translationally, phosphorylated at Ser-347 by BCKDK and dephosphorylated by protein phosphatase PPM1K. As to expression, expressed in kidney (at protein level).

Its subcellular location is the mitochondrion matrix. It carries out the reaction N(6)-[(R)-lipoyl]-L-lysyl-[protein] + 3-methyl-2-oxobutanoate + H(+) = N(6)-[(R)-S(8)-2-methylpropanoyldihydrolipoyl]-L-lysyl-[protein] + CO2. Functionally, together with BCKDHB forms the heterotetrameric E1 subunit of the mitochondrial branched-chain alpha-ketoacid dehydrogenase (BCKD) complex. The BCKD complex catalyzes the multi-step oxidative decarboxylation of alpha-ketoacids derived from the branched-chain amino-acids valine, leucine and isoleucine producing CO2 and acyl-CoA which is subsequently utilized to produce energy. The E1 subunit catalyzes the first step with the decarboxylation of the alpha-ketoacid forming an enzyme-product intermediate. A reductive acylation mediated by the lipoylamide cofactor of E2 extracts the acyl group from the E1 active site for the next step of the reaction. The protein is 2-oxoisovalerate dehydrogenase subunit alpha, mitochondrial (BCKDHA) of Bos taurus (Bovine).